Reading from the N-terminus, the 330-residue chain is MHFIDEVKIYIKGGNGGNGCISFHREKFVDRGGPDGGDGGFGGSVIFRSNHHINTLVNYRYQQHFIAENGGNGKGSNRSGKSGKSLILDVPIGTQIFSEDGNILLHDFTEDEKSFEIIKGGCGGLGNSHFKTSVNQAPRKRTEGEIAQEMWIHLRLKLLSDVGLVGLPNAGKSTFLSVVTAAKPKIADYPFTTLVPNLGVVYINDEEFVIADIPGLIAGAHQGHGLGDKFLKHIERCNVLIHLIDGSSHNVIADYDTVRFELESYSDYLKNKIEIICINKCDVLTDEEIQKKIKKLQRVTNKVVHPISTYTNLGVNKIVKLALEIIKNQI.

The Obg domain maps to 1 to 159 (MHFIDEVKIY…MWIHLRLKLL (159 aa)). In terms of domain architecture, OBG-type G spans 160–327 (SDVGLVGLPN…IVKLALEIIK (168 aa)). Residues 166-173 (GLPNAGKS), 191-195 (FTTLV), 212-215 (DIPG), 279-282 (NKCD), and 308-310 (STY) contribute to the GTP site. Mg(2+) is bound by residues Ser-173 and Thr-193.

Belongs to the TRAFAC class OBG-HflX-like GTPase superfamily. OBG GTPase family. Monomer. Requires Mg(2+) as cofactor.

Its subcellular location is the cytoplasm. Functionally, an essential GTPase which binds GTP, GDP and possibly (p)ppGpp with moderate affinity, with high nucleotide exchange rates and a fairly low GTP hydrolysis rate. Plays a role in control of the cell cycle, stress response, ribosome biogenesis and in those bacteria that undergo differentiation, in morphogenesis control. The protein is GTPase Obg of Rickettsia typhi (strain ATCC VR-144 / Wilmington).